Here is a 231-residue protein sequence, read N- to C-terminus: 6-hydroxymethyl-7,8-dihydropterin pyrophosphokinase (231 aa).

It belongs to the archaeal 6-HMPDK family. Mg(2+) serves as cofactor.

The enzyme catalyses 6-hydroxymethyl-7,8-dihydropterin + ATP = (7,8-dihydropterin-6-yl)methyl diphosphate + AMP + H(+). Its function is as follows. Catalyzes the transfer of diphosphate from ATP to 6-hydroxymethyl-7,8-dihydropterin (6-HMD), leading to 6-hydroxymethyl-7,8-dihydropterin diphosphate (6-HMDP). To a lesser extent, can also use CTP, UTP, and GTP as the nucleotide triphosphate substrate. The chain is 6-hydroxymethyl-7,8-dihydropterin pyrophosphokinase from Pyrococcus furiosus (strain ATCC 43587 / DSM 3638 / JCM 8422 / Vc1).